The following is a 146-amino-acid chain: Angiogenin (146 aa).

The first 24 residues, 1–24 (MAMSLCPLLLVFVLGLGLTPPSLA), serve as a signal peptide directing secretion. A Pyrrolidone carboxylic acid modification is found at glutamine 25. Histidine 37 (proton acceptor) is an active-site residue. Arginine 45 lines the tRNA pocket. Cystine bridges form between cysteine 50–cysteine 105, cysteine 63–cysteine 116, and cysteine 81–cysteine 131. The short motif at 55-59 (VRRHL) is the Nucleolar localization signal element. Residues cysteine 105 and isoleucine 127 each coordinate tRNA. Histidine 138 acts as the Proton donor in catalysis.

Belongs to the pancreatic ribonuclease family. Homodimer. Interacts with RNH1; inhibiting ANG ribonuclease activity. Interacts with PCNA.

It localises to the secreted. The protein localises to the nucleus. It is found in the nucleolus. Its subcellular location is the cytoplasm. The protein resides in the stress granule. Has weak tRNA ribonuclease activity by itself due to partial autoinhibition by its C-terminus, which folds into a short alpha-helix that partially occludes the substrate-binding site. In absence of stress, the ribonuclease activity is inhibited by RNH1 in the cytoplasm. In response to stress, dissociates from RNH1 in the cytoplasm and associates with cytoplasmic ribosomes with vacant A-sites: ribosomes directly activate the tRNA ribonuclease activity of ANG by refolding the C-terminal alpha-helix. In response to stress, the angiogenic activity of ANG is inhibited by RNH1 in the nucleus. Functionally, secreted ribonuclease that can either promote or restrict cell proliferation of target cells, depending on the context. Endocytosed in target cells via its receptor PLXNB2 and translocates to the cytoplasm or nucleus. Under stress conditions, localizes to the cytoplasm and promotes the assembly of stress granules (SGs): specifically cleaves a subset of tRNAs within anticodon loops to produce tRNA-derived stress-induced fragments (tiRNAs), resulting in translation repression and inhibition of cell proliferation. tiRNas also prevent formation of apoptosome, thereby promoting cell survival. Preferentially cleaves RNAs between a pyrimidine and an adenosine residue, suggesting that it cleaves the anticodon loop of tRNA(Ala) (32-UUAGCAU-38) after positions 33 and 36. Cleaves a subset of tRNAs, including tRNA(Ala), tRNA(Glu), tRNA(Gly), tRNA(Lys), tRNA(Val), tRNA(His), tRNA(Asp) and tRNA(Sec). Under growth conditions and in differentiated cells, translocates to the nucleus and stimulates ribosomal RNA (rRNA) transcription, including that containing the initiation site sequences of 45S rRNA, thereby promoting cell growth and proliferation. Angiogenin induces vascularization of normal and malignant tissues via its ability to promote rRNA transcription. Involved in hematopoietic stem and progenitor cell (HSPC) growth and survival by promoting rRNA transcription in growth conditions and inhibiting translation in response to stress, respectively. Mediates the crosstalk between myeloid and intestinal epithelial cells to protect the intestinal epithelial barrier integrity: secreted by myeloid cells and promotes intestinal epithelial cells proliferation and survival. Also mediates osteoclast-endothelial cell crosstalk in growing bone: produced by osteoclasts and protects the neighboring vascular cells against senescence by promoting rRNA transcription. In Equus caballus (Horse), this protein is Angiogenin (ANG).